We begin with the raw amino-acid sequence, 220 residues long: Large ribosomal subunit protein uL16 (220 aa).

The protein belongs to the universal ribosomal protein uL16 family. Component of the small ribosomal subunit. Mature ribosomes consist of a small (40S) and a large (60S) subunit. The 40S subunit contains about 33 different proteins and 1 molecule of RNA (18S). The 60S subunit contains about 49 different proteins and 3 molecules of RNA (25S, 5.8S and 5S).

This is Large ribosomal subunit protein uL16 (RPL10) from Vitis riparia (Frost grape).